The sequence spans 175 residues: Regenerating islet-derived protein 3-alpha (175 aa).

A signal peptide spans 1-26 (MLPHLVLNSISWMLLSCLLFVFQVQG). A propeptide spanning residues 27–37 (EDFQKEVPSPR) is cleaved from the precursor. 3 cysteine pairs are disulfide-bonded: Cys40-Cys51, Cys68-Cys171, and Cys146-Cys163. The C-type lectin domain occupies 47 to 172 (YRSHCYALVM…CDGTLPFVCK (126 aa)). Residues His50, His107, Glu121, and His145 each contribute to the Zn(2+) site. A sufficient to activate EXTL3 region spans residues 103–118 (WIGLHDPTMGQQPNGG).

In terms of assembly, forms a hexameric membrane-permeabilizing oligomeric pore on membrane phospholipids. The hexamer is formed by three dimers related by helical symmetry. Forms filaments, filamentation traps pore complexes and limits damage to host cells. Interacts with EXTL3. Proteolytic processing by trypsin removes an inhibitory N-terminal propeptide and is essential for peptidoglycan binding and antibacterial activity. As to expression, small intestine and pancreas.

It localises to the secreted. In terms of biological role, bactericidal C-type lectin. The lack of the EPN motif may explain its inability to bind peptidoglycan. Its function is as follows. Acts as a hormone in response to different stimuli like anti-inflammatory signals, such as IL17A, or gut microbiome. Secreted by different cell types to activate its receptor EXTL3 and induce cell specific signaling pathways. Induced by IL17A in keratinocytes, regulates keratinocyte proliferation and differentiation after skin injury via activation of EXTL3-PI3K-AKT signaling pathway. In parallel, inhibits skin inflammation through the inhibition of inflammatory cytokines such as IL6 and TNF. In pancreas, is able to permealize beta-cells membrane and stimulate their proliferation. In Mus musculus (Mouse), this protein is Regenerating islet-derived protein 3-alpha (Reg3a).